A 220-amino-acid polypeptide reads, in one-letter code: Large ribosomal subunit protein uL3 (220 aa).

Positions 132–153 are disordered; sequence SGRASHGNSRSHNVPGSIGMAQ. Residues 133–145 show a composition bias toward polar residues; that stretch reads GRASHGNSRSHNV. Residue Q153 is modified to N5-methylglutamine.

Belongs to the universal ribosomal protein uL3 family. As to quaternary structure, part of the 50S ribosomal subunit. Forms a cluster with proteins L14 and L19. Methylated by PrmB.

Its function is as follows. One of the primary rRNA binding proteins, it binds directly near the 3'-end of the 23S rRNA, where it nucleates assembly of the 50S subunit. The chain is Large ribosomal subunit protein uL3 from Ralstonia nicotianae (strain ATCC BAA-1114 / GMI1000) (Ralstonia solanacearum).